The following is a 472-amino-acid chain: Poly(A) polymerase catalytic subunit (472 aa).

Catalysis depends on residues Asp194 and Asp196.

Belongs to the poxviridae poly(A) polymerase catalytic subunit family. In terms of assembly, heterodimer of a large (catalytic) subunit and a small (regulatory) subunit.

The enzyme catalyses RNA(n) + ATP = RNA(n)-3'-adenine ribonucleotide + diphosphate. Polymerase that creates the 3'-poly(A) tail of mRNA's. In Serinus (CNPV), this protein is Poly(A) polymerase catalytic subunit (PAPL).